Consider the following 395-residue polypeptide: Elongation factor Tu (395 aa).

A tr-type G domain is found at K10 to E205. Residues G19–T26 form a G1 region. Residue G19 to T26 coordinates GTP. A Mg(2+)-binding site is contributed by T26. Residues G60–A64 form a G2 region. The segment at D81–G84 is G3. Residues D81 to H85 and N136 to D139 each bind GTP. The segment at N136 to D139 is G4. The G5 stretch occupies residues S173–L175.

It belongs to the TRAFAC class translation factor GTPase superfamily. Classic translation factor GTPase family. EF-Tu/EF-1A subfamily. In terms of assembly, monomer.

The protein localises to the cytoplasm. It catalyses the reaction GTP + H2O = GDP + phosphate + H(+). GTP hydrolase that promotes the GTP-dependent binding of aminoacyl-tRNA to the A-site of ribosomes during protein biosynthesis. In Acidiphilium cryptum (strain JF-5), this protein is Elongation factor Tu.